A 440-amino-acid polypeptide reads, in one-letter code: uncharacterized protein (440 aa).

A signal peptide spans 1–29 (MLRLQMMEGLIVKRTLLLILLLVISVSYA).

The protein belongs to the Mj S-layer protein family.

This is an uncharacterized protein from Methanocaldococcus jannaschii (strain ATCC 43067 / DSM 2661 / JAL-1 / JCM 10045 / NBRC 100440) (Methanococcus jannaschii).